A 484-amino-acid polypeptide reads, in one-letter code: Ribosomal RNA small subunit methyltransferase F (484 aa).

S-adenosyl-L-methionine-binding positions include 126–132 (AAAPGSK), Glu150, Asp177, and Asp195. The active-site Nucleophile is Cys248.

Belongs to the class I-like SAM-binding methyltransferase superfamily. RsmB/NOP family.

It is found in the cytoplasm. The enzyme catalyses cytidine(1407) in 16S rRNA + S-adenosyl-L-methionine = 5-methylcytidine(1407) in 16S rRNA + S-adenosyl-L-homocysteine + H(+). In terms of biological role, specifically methylates the cytosine at position 1407 (m5C1407) of 16S rRNA. This chain is Ribosomal RNA small subunit methyltransferase F, found in Pectobacterium atrosepticum (strain SCRI 1043 / ATCC BAA-672) (Erwinia carotovora subsp. atroseptica).